Here is a 147-residue protein sequence, read N- to C-terminus: Large ribosomal subunit protein uL13 (147 aa).

The protein belongs to the universal ribosomal protein uL13 family. In terms of assembly, part of the 50S ribosomal subunit.

Its function is as follows. This protein is one of the early assembly proteins of the 50S ribosomal subunit, although it is not seen to bind rRNA by itself. It is important during the early stages of 50S assembly. In Renibacterium salmoninarum (strain ATCC 33209 / DSM 20767 / JCM 11484 / NBRC 15589 / NCIMB 2235), this protein is Large ribosomal subunit protein uL13.